A 161-amino-acid chain; its full sequence is MQTIEQQITNVIEESLTDMGFELVLVKFKGVNPKVVEILIDSLNSEKVSVEDCTKASRTISAILDVEDLIEAAYSLEVASSGLERPLVKFENYNRFLEREVKIKLKELLNGKTRYQGKIIKAENNKIYLKCEEQEVLIDYDLIKNANLVLTEEVFKKLLKQ.

Belongs to the RimP family.

It is found in the cytoplasm. In terms of biological role, required for maturation of 30S ribosomal subunits. In Rickettsia rickettsii (strain Iowa), this protein is Ribosome maturation factor RimP.